Consider the following 532-residue polypeptide: Probable cytochrome c oxidase subunit 1 (532 aa).

Transmembrane regions (helical) follow at residues 33–53, 74–94, 95–115, 118–138, 163–183, 200–220, 252–272, and 284–304; these read IMYI…SLLF, VLIT…ALFG, GFGN…FPRL, ISFW…FVDG, MAIF…INLI, PLFV…MPVL, LFWF…FGIV, and IFGY…GFIV. H79 provides a ligand contact to Fe(II)-heme a. Positions 258 and 262 each coordinate Cu cation. Positions 307 and 308 each coordinate Cu cation. Transmembrane regions (helical) follow at residues 318-338 and 355-375; these read ALIY…IKIF and MLFS…GIIL. A heme a3-binding site is contributed by H393. The next 3 membrane-spanning stretches (helical) occupy residues 394-414, 431-451, and 473-493; these read FHYT…YYWF, FWIT…LGLA, and IGAG…FYTL. Residue H395 coordinates Fe(II)-heme a.

The protein belongs to the heme-copper respiratory oxidase family.

Its subcellular location is the cell membrane. It catalyses the reaction 4 Fe(II)-[cytochrome c] + O2 + 8 H(+)(in) = 4 Fe(III)-[cytochrome c] + 2 H2O + 4 H(+)(out). It participates in energy metabolism; oxidative phosphorylation. Cytochrome c oxidase is the component of the respiratory chain that catalyzes the reduction of oxygen to water. Subunits 1-3 form the functional core of the enzyme complex. CO I is the catalytic subunit of the enzyme. Electrons originating in cytochrome c are transferred via the copper A center of subunit 2 and heme A of subunit 1 to the bimetallic center formed by heme A3 and copper B. This Rickettsia conorii (strain ATCC VR-613 / Malish 7) protein is Probable cytochrome c oxidase subunit 1 (ctaD).